The following is a 176-amino-acid chain: ADP-ribosylation factor-like protein 11 (176 aa).

Residue G2 is the site of N-myristoyl glycine attachment. Residues 19–26 (GLDSAGKT), 63–67 (DIGGQ), and 122–125 (NKQE) contribute to the GTP site.

This sequence belongs to the small GTPase superfamily. Arf family.

May play a role in apoptosis. May act as a tumor suppressor. This is ADP-ribosylation factor-like protein 11 (Arl11) from Mus musculus (Mouse).